The sequence spans 53 residues: Conotoxin Vc5.3 (53 aa).

The first 15 residues, 1–15 (VILLLLTASAPSVDA), serve as a signal peptide directing secretion. Residues 16–41 (RPKTEDVPLSSFRDNTKSTLQRLLKR) constitute a propeptide that is removed on maturation.

This sequence belongs to the conotoxin T superfamily. In terms of processing, contains 2 disulfide bonds that can be either 'C1-C3, C2-C4' or 'C1-C4, C2-C3', since these disulfide connectivities have been observed for conotoxins with cysteine framework V (for examples, see AC P0DQQ7 and AC P81755). In terms of tissue distribution, expressed by the venom duct.

Its subcellular location is the secreted. The polypeptide is Conotoxin Vc5.3 (Conus victoriae (Queen Victoria cone)).